The primary structure comprises 360 residues: MAGCRELELTNGSNGGLEFNPMKEYMILSDAQQIAVAVLCTLMGLLSALENVAVLYLILSSQRLRRKPSYLFIGSLAGADFLASVIFACNFVIFHVFHGVDSRNIFLLKIGSVTMTFTASVGSLLLTAVDRYLCLCYPPTYKALVTRGRALVALGVMWVLSALISYLPLMGWTCCPSPCSELFPLIPNDYLLGWLLFIAILFSGIIYTYGYVLWKAHQHVASLAEHQDRQVPGIARMRLDVRLAKTLGLVMAVLLICWFPALALMGHSLVTTLSDKVKEAFAFCSMLCLVNSMINPIIYALRSGEIRSAAQHCLTGWKKYLQGLGSEGKEEAPKSSVTETEAEVKTTTGPGSRTPGCSNC.

The Extracellular portion of the chain corresponds to 1–33 (MAGCRELELTNGSNGGLEFNPMKEYMILSDAQQ). Asn11 carries N-linked (GlcNAc...) asparagine glycosylation. A helical membrane pass occupies residues 34 to 59 (IAVAVLCTLMGLLSALENVAVLYLIL). Residues 60–71 (SSQRLRRKPSYL) are Cytoplasmic-facing. Residues 72–92 (FIGSLAGADFLASVIFACNFV) form a helical membrane-spanning segment. Residues 93-104 (IFHVFHGVDSRN) lie on the Extracellular side of the membrane. Residues 105-129 (IFLLKIGSVTMTFTASVGSLLLTAV) form a helical membrane-spanning segment. The Cytoplasmic segment spans residues 130 to 149 (DRYLCLCYPPTYKALVTRGR). Residues 150–172 (ALVALGVMWVLSALISYLPLMGW) form a helical membrane-spanning segment. Topologically, residues 173–188 (TCCPSPCSELFPLIPN) are extracellular. A helical transmembrane segment spans residues 189–214 (DYLLGWLLFIAILFSGIIYTYGYVLW). The Cytoplasmic segment spans residues 215–246 (KAHQHVASLAEHQDRQVPGIARMRLDVRLAKT). The helical transmembrane segment at 247-267 (LGLVMAVLLICWFPALALMGH) threads the bilayer. The Extracellular segment spans residues 268-279 (SLVTTLSDKVKE). A helical transmembrane segment spans residues 280 to 301 (AFAFCSMLCLVNSMINPIIYAL). Topologically, residues 302-360 (RSGEIRSAAQHCLTGWKKYLQGLGSEGKEEAPKSSVTETEAEVKTTTGPGSRTPGCSNC) are cytoplasmic. Residues 327–360 (EGKEEAPKSSVTETEAEVKTTTGPGSRTPGCSNC) are disordered. Ser335 and Ser336 each carry phosphoserine. A Phosphothreonine modification is found at Thr338. Over residues 349-360 (GPGSRTPGCSNC) the composition is skewed to polar residues. Phosphoserine is present on Ser352.

It belongs to the G-protein coupled receptor 1 family. Post-translationally, constitutively phosphorylated on Ser-352; phosphorylation increases cell internalization and desensitizes the receptor. As to expression, expressed in spleen and brain by neurons and glial cells (at protein level). Expressed in lung, testis and thymus but not in heart, liver or kidney. Expressed in cerebellum, cortex and brainstem.

It is found in the cell membrane. The protein localises to the cell projection. It localises to the dendrite. Its subcellular location is the perikaryon. Its function is as follows. Heterotrimeric G protein-coupled receptor for endocannabinoid 2-arachidonoylglycerol mediating inhibition of adenylate cyclase. May function in inflammatory response, nociceptive transmission and bone homeostasis. This Rattus norvegicus (Rat) protein is Cannabinoid receptor 2 (Cnr2).